A 285-amino-acid chain; its full sequence is K88 fimbrial protein AB (285 aa).

The signal sequence occupies residues 1–21; sequence MKKTLIALAIAASAASGMAHA.

The protein belongs to the fimbrial K88 protein family. As to quaternary structure, K88 fimbria, 0.1-1 micrometer in length and 7 nanometers in diameter, is composed of about 100 identical subunits.

The protein localises to the fimbrium. Its function is as follows. K88 major fimbrial subunit. Fimbriae (also called pili), are polar filaments radiating from the surface of the bacterium to a length of 0.5-1.5 micrometers and numbering 100-300 per cell. They enable bacteria to colonize the epithelium of specific host organs. The sequence is that of K88 fimbrial protein AB (faeG) from Escherichia coli.